The primary structure comprises 299 residues: Peroxisomal biogenesis factor 19 (299 aa).

Residues 1-63 (MAAAEEDYGV…SPGDTAKDSL (63 aa)) are disordered. Ala2 is modified (N-acetylalanine). Residues 2-56 (AAAEEDYGVGAEADRELEELLESALDDFDKAKPSPAPPSTTTAPDASGPQKRSPG) are docking to the peroxisome membrane and binding to PEX3. The necessary for PEX19 function on peroxisome biogenesis stretch occupies residues 2-91 (AAAEEDYGVG…QATAEFEKAM (90 aa)). Residues 16–27 (RELEELLESALD) show a composition bias toward acidic residues. A phosphoserine mark is found at Ser35, Ser54, and Ser66. A Phosphothreonine modification is found at Thr236. Cys296 bears the Cysteine methyl ester mark. A lipid anchor (S-farnesyl cysteine) is attached at Cys296. A propeptide spans 297–299 (LIM) (removed in mature form).

The protein belongs to the peroxin-19 family. Interacts with a broad range of peroxisomal membrane proteins, including PEX3, PEX10, PEX11A, PEX11B, PEX12, PEX13, PEX14 and PEX16, PXMP2/PMP22, PXMP4/PMP24, SLC25A17/PMP34, ABCD1/ALDP, ABCD2/ALDRP, and ABCD3/PMP70. Also interacts with the tumor suppressor CDKN2A/p19ARF.

Its subcellular location is the cytoplasm. The protein resides in the peroxisome membrane. In terms of biological role, necessary for early peroxisomal biogenesis. Acts both as a cytosolic chaperone and as an import receptor for peroxisomal membrane proteins (PMPs). Binds and stabilizes newly synthesized PMPs in the cytoplasm by interacting with their hydrophobic membrane-spanning domains, and targets them to the peroxisome membrane by binding to the integral membrane protein PEX3. Excludes CDKN2A from the nucleus and prevents its interaction with MDM2, which results in active degradation of TP53. This Pongo abelii (Sumatran orangutan) protein is Peroxisomal biogenesis factor 19 (PEX19).